Reading from the N-terminus, the 163-residue chain is Arginine repressor (163 aa).

Belongs to the ArgR family.

It is found in the cytoplasm. It functions in the pathway amino-acid biosynthesis; L-arginine biosynthesis [regulation]. Its function is as follows. Regulates arginine biosynthesis genes. This chain is Arginine repressor, found in Corynebacterium diphtheriae (strain ATCC 700971 / NCTC 13129 / Biotype gravis).